We begin with the raw amino-acid sequence, 425 residues long: Elongation factor 1-alpha (425 aa).

Residues K5–T221 form the tr-type G domain. Positions G14 to S21 are G1. Residue G14–S21 participates in GTP binding. S21 is a binding site for Mg(2+). Residues G70–D74 are G2. A G3 region spans residues D91–G94. Residues D91–H95 and N146–D149 contribute to the GTP site. The interval N146–D149 is G4. The tract at residues S185–F187 is G5.

The protein belongs to the TRAFAC class translation factor GTPase superfamily. Classic translation factor GTPase family. EF-Tu/EF-1A subfamily.

The protein resides in the cytoplasm. It carries out the reaction GTP + H2O = GDP + phosphate + H(+). Its function is as follows. GTP hydrolase that promotes the GTP-dependent binding of aminoacyl-tRNA to the A-site of ribosomes during protein biosynthesis. The chain is Elongation factor 1-alpha from Methanoculleus marisnigri (strain ATCC 35101 / DSM 1498 / JR1).